Reading from the N-terminus, the 267-residue chain is Transcription factor Spi-B (267 aa).

Residues Met-1–Pro-31 form a TAD1 (Acidic) region. Residues Leu-41–Phe-62 are TAD2. Positions Leu-174–Asp-257 form a DNA-binding region, ETS.

It belongs to the ETS family. In terms of assembly, can form homotypic interactions. Interacts with IRF4/Pip. Interacts with JUN. Interacts with TBP. May also interact with CREBBP and EP300. Interacts with NONO/p54(nrb). As to expression, expressed in the medulla of the thymus, the spleen and germinal centers of the lymph nodes. Expressed in B-cells and T-cells, expression increases during B-cell maturation and decreases during T-cell maturation.

Its subcellular location is the nucleus. In terms of biological role, sequence specific transcriptional activator which binds to the PU-box, a purine-rich DNA sequence (5'-GAGGAA-3') that can act as a lymphoid-specific enhancer. Promotes development of plasmacytoid dendritic cells (pDCs), also known as type 2 DC precursors (pre-DC2) or natural interferon (IFN)-producing cells. These cells have the capacity to produce large amounts of interferon and block viral replication. Required for B-cell receptor (BCR) signaling, which is necessary for normal B-cell development and antigenic stimulation. The protein is Transcription factor Spi-B (Spib) of Mus musculus (Mouse).